The sequence spans 483 residues: MLTLDTLNVMLAVSEEGMIEEMILALLSSPVLAVIFEKSPRLKKAITNDLPRWREALRTRLKDVHVPPELTEEVMCYQQSQLLSTPQFIVQLPQILALLYRLHSPYADQAQQLVDGNSRFTPALHTLFLQRWRLSLVVQATTFNQQLLEEEREQLLSEVQERMTLSGQLEPVLVDNDNAAGHLWDMSAGQLKRGDYQLIVKYGDFLAQQPELRQLAEQLGRSREAKSVPRKDAPMEAFRTLVREPATVPEQVEGLHQSDDILRLLPPELATLGISELEYEFYRRLVEKQLLTYRLQGEAWREKITERPVTHQDFEEQPRGPFIVCVDTSGSMGGFNEQCAKAFCLALMRIALADNRRCFIMLFSTEIVSYELSCPQGIEQAIRFLSQRFRGGTDLASCFRTIIERMQGREWFDADAVVISDFIAQRLPDDVVNKVKTLQKEHQHRFHAVAMSAHGKPGIMRIFDHIWRFDTGMRSRLLRRWRR.

The protein belongs to the ViaA family. As to quaternary structure, homodimer. Interacts with RavA.

The protein localises to the cytoplasm. In terms of biological role, component of the RavA-ViaA chaperone complex, which may act on the membrane to optimize the function of some of the respiratory chains. ViaA stimulates the ATPase activity of RavA. The sequence is that of Regulatory protein ViaA from Escherichia fergusonii (strain ATCC 35469 / DSM 13698 / CCUG 18766 / IAM 14443 / JCM 21226 / LMG 7866 / NBRC 102419 / NCTC 12128 / CDC 0568-73).